The following is a 622-amino-acid chain: Kelch-like protein 14 (622 aa).

Positions 33 to 145 (CDVTLTAQGQ…LYTANVTLSL (113 aa)) constitute a BTB domain. Positions 73-108 (ALGPGAQDGLGGAPPKEPPPPPQEEPGTPSSSPEDK) are disordered. Over residues 87–96 (PKEPPPPPQE) the composition is skewed to pro residues. Kelch repeat units follow at residues 317–366 (MLLL…EVEN), 367–418 (FLFV…RLDK), 419–465 (NLYV…VHNG), 467–512 (IYIS…VMND), 514–564 (LYAI…VLDD), and 566–614 (IYLV…TVIL).

It is found in the cytoplasm. The protein localises to the cytosol. It localises to the endoplasmic reticulum membrane. The sequence is that of Kelch-like protein 14 (KLHL14) from Gallus gallus (Chicken).